Reading from the N-terminus, the 899-residue chain is Bifunctional uridylyltransferase/uridylyl-removing enzyme (899 aa).

The segment at 1-347 is uridylyltransferase; the sequence is MFISDPTDSL…PESERPEKSV (347 aa). The interval 348-718 is uridylyl-removing; that stretch reads LNARFNRVGD…EHRELALDAV (371 aa). Residues 465-581 enclose the HD domain; sequence VDAHILLLIR…TKFANLVGNV (117 aa). ACT domains are found at residues 719 to 804 and 827 to 899; these read QIFI…RLPR and VMSL…TPSC.

Belongs to the GlnD family. Requires Mg(2+) as cofactor.

It catalyses the reaction [protein-PII]-L-tyrosine + UTP = [protein-PII]-uridylyl-L-tyrosine + diphosphate. The enzyme catalyses [protein-PII]-uridylyl-L-tyrosine + H2O = [protein-PII]-L-tyrosine + UMP + H(+). Uridylyltransferase (UTase) activity is inhibited by glutamine, while glutamine activates uridylyl-removing (UR) activity. Modifies, by uridylylation and deuridylylation, the PII regulatory proteins (GlnB and homologs), in response to the nitrogen status of the cell that GlnD senses through the glutamine level. Under low glutamine levels, catalyzes the conversion of the PII proteins and UTP to PII-UMP and PPi, while under higher glutamine levels, GlnD hydrolyzes PII-UMP to PII and UMP (deuridylylation). Thus, controls uridylylation state and activity of the PII proteins, and plays an important role in the regulation of nitrogen assimilation and metabolism. The sequence is that of Bifunctional uridylyltransferase/uridylyl-removing enzyme from Psychrobacter sp. (strain PRwf-1).